The primary structure comprises 361 residues: Putative F-box protein At1g33010 (361 aa).

The 47-residue stretch at 4-50 (GNTLDSIPTDLILEIFSRLSAKSVGRLRCLSKLWRKGEWFFFSSLQP) folds into the F-box domain. The segment at 308–339 (SIRPTEQKHKPTSTETSMSRKDHQVRTIDQPQ) is disordered.

The chain is Putative F-box protein At1g33010 from Arabidopsis thaliana (Mouse-ear cress).